Consider the following 400-residue polypeptide: S-adenosylmethionine synthase (400 aa).

ATP is bound at residue His-17. Mg(2+) is bound at residue Asp-19. Glu-45 is a binding site for K(+). 2 residues coordinate L-methionine: Glu-58 and Gln-101. The flexible loop stretch occupies residues 101–111 (QSADIAMGVDQ). Residues 177-179 (DGK), 244-245 (RF), Asp-253, 259-260 (RK), Ala-276, and Lys-280 contribute to the ATP site. Asp-253 is a binding site for L-methionine. An L-methionine-binding site is contributed by Lys-284.

Belongs to the AdoMet synthase family. As to quaternary structure, homotetramer; dimer of dimers. Mg(2+) is required as a cofactor. It depends on K(+) as a cofactor.

It is found in the cytoplasm. The enzyme catalyses L-methionine + ATP + H2O = S-adenosyl-L-methionine + phosphate + diphosphate. It participates in amino-acid biosynthesis; S-adenosyl-L-methionine biosynthesis; S-adenosyl-L-methionine from L-methionine: step 1/1. Functionally, catalyzes the formation of S-adenosylmethionine (AdoMet) from methionine and ATP. The overall synthetic reaction is composed of two sequential steps, AdoMet formation and the subsequent tripolyphosphate hydrolysis which occurs prior to release of AdoMet from the enzyme. This is S-adenosylmethionine synthase from Bacillus subtilis (strain 168).